Reading from the N-terminus, the 1019-residue chain is Photoactivated adenylate cyclase subunit alpha-like protein 1224-5/1F (1019 aa).

The region spanning 55–148 (LRRLMYLSAS…GRMYGWWHLK (94 aa)) is the BLUF 1 domain. The 129-residue stretch at 204–332 (VVTVIYLVEF…DWINSASRIT (129 aa)) folds into the Guanylate cyclase 1 domain. Positions 467-559 (LITLTYISQA…GVYGSPLDMT (93 aa)) constitute a BLUF 2 domain. A Guanylate cyclase 2 domain is found at 615 to 744 (VMLATAISSF…EVRARVLEVE (130 aa)). Positions 825-863 (NISCRGGNPPAGGIPTSPKVRPPGRTNSVSSYTPDPKQA) are disordered.

It belongs to the adenylyl cyclase class-4/guanylyl cyclase family. Heterotetramer of two alpha and two beta subunits.

Its subcellular location is the cell projection. It is found in the cilium. The protein resides in the flagellum. The sequence is that of Photoactivated adenylate cyclase subunit alpha-like protein 1224-5/1F from Euglena gracilis.